Here is a 271-residue protein sequence, read N- to C-terminus: MSSSTLLHLLLLSSLLFSCLSCLTNVEDEFSYIEGNPNGPENWGNLKPEWETCGKGMEQSPIQLRDNRVIFDQTLGKLRRNYRAVDARLRNSGHDVLVDFKGNAGSLSINRVEYQLKRIHFHSPSEHEMNGERFDLEAQLVHESQDQKRAVVSILFRFGRADPFLSDLEDFIKQFSNSQKNEINAGVVDPNQLQIDDSAYYRYMGSFTAPPCTEGISWTVMRKVATVSPRQVLLLKQAVNENAINNARPLQPTNFRSVFYFEQLKSKLGVI.

The N-terminal stretch at 1-21 (MSSSTLLHLLLLSSLLFSCLS) is a signal peptide. An Alpha-carbonic anhydrase domain is found at 28–262 (DEFSYIEGNP…TNFRSVFYFE (235 aa)). Cys53 and Cys212 are disulfide-bonded. The Proton acceptor role is filled by His94. Residues Asp95, 120 to 122 (HFH), Gln139, and 208 to 209 (TA) contribute to the L-ascorbate site.

It belongs to the alpha-carbonic anhydrase family. Monomer. Homodimer. In terms of processing, not glycosylated. In terms of tissue distribution, expressed in tuber (at protein level).

The enzyme catalyses hydrogencarbonate + H(+) = CO2 + H2O. It catalyses the reaction 2 monodehydro-L-ascorbate radical + NADH + H(+) = 2 L-ascorbate + NAD(+). With respect to regulation, the carbonate dehydratase activity is not substantially changed by the addition of Zn(2+). Its function is as follows. Storage protein of tuber. Involved in protection against oxidative stress. Has carbonate dehydratase, trypsin inhibitor, dehydroascorbate (DHA) reductase and monodehydroascorbate (MDA) reductase activities. Catalyzes the reactions of carbonate dehydratase and DHA reductase independently of zinc and glutathione (GSH). The coupled reaction is capable of recycling a plant antioxidant ascorbate using ubiquitous compounds H(2)O and CO(2). Exhibits antioxidant activity. Able to scavenge 1,1-diphenyl-2-picrylhydrazyl (DPPH) radical. Exhibits immunomodulatory activity. Activates Toll-like receptor 4 signaling pathways by up-regulating the gene expression of pro-inflammatory cytokines, such as tumor necrosis factor alpha, interleukin-1 beta and interleukin-6, and chemokines RANTES and MCP-1, in mouse RAW 264.7 macrophages. Stimulates the phagocytosis of E.coli by the LPS-treated mouse macrophages. In Dioscorea japonica (Japanese yam), this protein is Dioscorin dioA3.